The sequence spans 718 residues: Myeloperoxidase (718 aa).

Residues 1 to 15 form the signal peptide; sequence MKLLLALAGLLAPLA. Residues 16 to 138 constitute a propeptide that is removed on maturation; sequence MLQTSNGATP…SSGCAYQDVR (123 aa). A glycan (N-linked (GlcNAc...) asparagine) is linked at Asn113. A disulfide bond links Cys141 and Cys154. Residue Asp234 participates in heme b binding. The active-site Proton acceptor is the His235. Asp236 contacts Ca(2+). 2 disulfide bridges follow: Cys255/Cys265 and Cys259/Cys283. Cys290 carries the cysteine sulfenic acid (-SOH) modification. Residue Asn297 is glycosylated (N-linked (GlcNAc...) asparagine). Residues Thr308, Phe310, Asp312, and Ser314 each contribute to the Ca(2+) site. 2 N-linked (GlcNAc...) asparagine glycosylation sites follow: Asn329 and Asn365. Cys361 and Cys372 form a disulfide bridge. Heme b is bound by residues Glu382 and Met383. N-linked (GlcNAc...) asparagine glycosylation is present at Asn457. His476 is a binding site for heme b. Intrachain disulfides connect Cys580–Cys637 and Cys678–Cys704. Asn711 carries N-linked (GlcNAc...) asparagine glycosylation.

Belongs to the peroxidase family. XPO subfamily. In terms of assembly, homodimer; disulfide-linked. Each monomer consists of a light and a heavy chain. Found in a complex with CP and LTF; interacts directly with CP, which protects CP antioxidant properties by MPO. The cofactor is Ca(2+). Heme b serves as cofactor.

It is found in the lysosome. It catalyses the reaction chloride + H2O2 + H(+) = hypochlorous acid + H2O. Functionally, part of the host defense system of polymorphonuclear leukocytes. It is responsible for microbicidal activity against a wide range of organisms. In the stimulated PMN, MPO catalyzes the production of hypohalous acids, primarily hypochlorous acid in physiologic situations, and other toxic intermediates that greatly enhance PMN microbicidal activity. Mediates the proteolytic cleavage of alpha-1-microglobulin to form t-alpha-1-microglobulin, which potently inhibits oxidation of low density lipoprotein particles and limits vascular damage. The polypeptide is Myeloperoxidase (Mpo) (Mus musculus (Mouse)).